A 265-amino-acid chain; its full sequence is Hydroxyethylthiazole kinase (265 aa).

Residue Met44 participates in substrate binding. Residues Lys120 and Thr166 each coordinate ATP. Gly193 provides a ligand contact to substrate.

It belongs to the Thz kinase family. The cofactor is Mg(2+).

It catalyses the reaction 5-(2-hydroxyethyl)-4-methylthiazole + ATP = 4-methyl-5-(2-phosphooxyethyl)-thiazole + ADP + H(+). It participates in cofactor biosynthesis; thiamine diphosphate biosynthesis; 4-methyl-5-(2-phosphoethyl)-thiazole from 5-(2-hydroxyethyl)-4-methylthiazole: step 1/1. Catalyzes the phosphorylation of the hydroxyl group of 4-methyl-5-beta-hydroxyethylthiazole (THZ). In Clostridium novyi (strain NT), this protein is Hydroxyethylthiazole kinase.